Reading from the N-terminus, the 768-residue chain is Probable beta-glucosidase M (768 aa).

Residues 1–19 form the signal peptide; sequence MHAIAGLTGFLAGVSLSYA. N-linked (GlcNAc...) asparagine glycosylation is found at asparagine 25, asparagine 72, and asparagine 259. Aspartate 287 is an active-site residue. Asparagine 315, asparagine 322, asparagine 394, asparagine 434, asparagine 472, asparagine 543, and asparagine 651 each carry an N-linked (GlcNAc...) asparagine glycan.

Belongs to the glycosyl hydrolase 3 family.

Its subcellular location is the secreted. It carries out the reaction Hydrolysis of terminal, non-reducing beta-D-glucosyl residues with release of beta-D-glucose.. The protein operates within glycan metabolism; cellulose degradation. Its function is as follows. Beta-glucosidases are one of a number of cellulolytic enzymes involved in the degradation of cellulosic biomass. Catalyzes the last step releasing glucose from the inhibitory cellobiose. This Aspergillus flavus (strain ATCC 200026 / FGSC A1120 / IAM 13836 / NRRL 3357 / JCM 12722 / SRRC 167) protein is Probable beta-glucosidase M (bglM).